The chain runs to 688 residues: MARTSASHPATSAPAERAAWLRAELERANYAYYVLDQPDLPDAEYDKLFKELESIETEHPDLIVPDSPTQRVGGEAASGFEPVVHDQPMLSLNNGFADEDIVAFDKRVGDALGKNASEPPVPVDYAAELKFDGLAISLRYVDGAFVQASTRGDGTTGENVTENVRTIRSIPLKLKGKRVPHVLDVRGEVLMFKRDFERLNERQRAAEQKEFANPRNAAAGSLRQLDSKITAQRPLSFFAYGIGVLEGMEMPATHSELLDWYKELGLPVNSERAVVQGAEGLLGFFHGVGEKREKLPYDIDGVVYKVNRRDEQDALGFVSRAPRFALAHKFPAQEALTKLVAIDVQVGRTGAITPVARLEPVFVGGATVTNATLHNEDEVRRKDIRIGDTVIVRRAGDVIPEVVSALLDRRPSDAREFVMPTQCPVCGSSIERLPDEAIARCTGGLFCPAQRKQALWHFAQRRALDIDGLGEKIIDQLVEQNLVRTPADLFNIGFATLAELDRFAEKSAQNLLDSLEKAKHTTLARFIYALGIRHVGESTAKDLAKHFGSLDPIMDASVEALLEVNDVGPVVAESIHQFFAEEHNRTVIEQLRAPGKVTWPEGPPAPKAPQGVLAGKTVVLTGTLPSLAREEAKEMLEAAGAKVAGSVSKKTDYLVAGADAGSKLAKAEELGVPVLDEDGMRKLLEGQL.

NAD(+) contacts are provided by residues Asp42–Asp46, Ser91–Leu92, and Glu128. The active-site N6-AMP-lysine intermediate is the Lys130. The NAD(+) site is built by Arg151, Glu188, Lys305, and Lys329. Residues Cys423, Cys426, Cys441, and Cys447 each contribute to the Zn(2+) site. The 81-residue stretch at Ala608 to Leu688 folds into the BRCT domain.

It belongs to the NAD-dependent DNA ligase family. LigA subfamily. Mg(2+) serves as cofactor. Mn(2+) is required as a cofactor.

It catalyses the reaction NAD(+) + (deoxyribonucleotide)n-3'-hydroxyl + 5'-phospho-(deoxyribonucleotide)m = (deoxyribonucleotide)n+m + AMP + beta-nicotinamide D-nucleotide.. In terms of biological role, DNA ligase that catalyzes the formation of phosphodiester linkages between 5'-phosphoryl and 3'-hydroxyl groups in double-stranded DNA using NAD as a coenzyme and as the energy source for the reaction. It is essential for DNA replication and repair of damaged DNA. This chain is DNA ligase, found in Paraburkholderia phytofirmans (strain DSM 17436 / LMG 22146 / PsJN) (Burkholderia phytofirmans).